Here is a 360-residue protein sequence, read N- to C-terminus: Peptide chain release factor 1 (360 aa).

Glutamine 237 is subject to N5-methylglutamine.

The protein belongs to the prokaryotic/mitochondrial release factor family. Post-translationally, methylated by PrmC. Methylation increases the termination efficiency of RF1.

It is found in the cytoplasm. Peptide chain release factor 1 directs the termination of translation in response to the peptide chain termination codons UAG and UAA. This Pseudomonas putida (strain W619) protein is Peptide chain release factor 1.